The primary structure comprises 131 residues: Biogenesis of lysosome-related organelles complex 1 subunit CNL1 (131 aa).

Positions 1–29 (MSAPDSNSGHAHDSAQNEGAAEGTRDPFG) are disordered. Residues 73-101 (DAIDINIEEMRRILQKCEELETHFDMLDQ) adopt a coiled-coil conformation.

Belongs to the BLOC1S4 family. Component of the biogenesis of lysosome-related organelles complex-1 (BLOC-1).

The protein localises to the cytoplasm. In terms of biological role, component of the biogenesis of lysosome-related organelles complex-1 (BLOC-1), a complex that is involved in endosomal cargo sorting. This Lachancea thermotolerans (strain ATCC 56472 / CBS 6340 / NRRL Y-8284) (Yeast) protein is Biogenesis of lysosome-related organelles complex 1 subunit CNL1 (CLN1).